The primary structure comprises 150 residues: Large ribosomal subunit protein bL9 (150 aa).

This sequence belongs to the bacterial ribosomal protein bL9 family.

Functionally, binds to the 23S rRNA. The polypeptide is Large ribosomal subunit protein bL9 (Verminephrobacter eiseniae (strain EF01-2)).